The primary structure comprises 237 residues: Ribosomal RNA small subunit methyltransferase G (237 aa).

S-adenosyl-L-methionine contacts are provided by residues glycine 79, 130 to 131, and arginine 147; that span reads CE.

Belongs to the methyltransferase superfamily. RNA methyltransferase RsmG family.

It is found in the cytoplasm. Its function is as follows. Specifically methylates the N7 position of a guanine in 16S rRNA. The chain is Ribosomal RNA small subunit methyltransferase G from Malacoplasma penetrans (strain HF-2) (Mycoplasma penetrans).